The chain runs to 1157 residues: ATP-dependent helicase/deoxyribonuclease subunit B (1157 aa).

The region spanning 1–278 is the UvrD-like helicase ATP-binding domain; sequence MTLQIIAGRS…FFLENKRAKT (278 aa). 8 to 15 contacts ATP; that stretch reads GRSGTGKT. A UvrD-like helicase C-terminal domain is found at 272–590; it reads ENKRAKTESL…VLSDMENAKL (319 aa). Cysteine 794, cysteine 1115, cysteine 1118, and cysteine 1124 together coordinate [4Fe-4S] cluster.

It belongs to the helicase family. AddB/RexB type 1 subfamily. Heterodimer of AddA and AddB. It depends on Mg(2+) as a cofactor. [4Fe-4S] cluster is required as a cofactor.

In terms of biological role, the heterodimer acts as both an ATP-dependent DNA helicase and an ATP-dependent, dual-direction single-stranded exonuclease. Recognizes the chi site generating a DNA molecule suitable for the initiation of homologous recombination. The AddB subunit has 5' -&gt; 3' nuclease activity but not helicase activity. The sequence is that of ATP-dependent helicase/deoxyribonuclease subunit B from Listeria monocytogenes serotype 4a (strain HCC23).